A 412-amino-acid chain; its full sequence is Divalent metal cation transporter MntH (412 aa).

The next 11 helical transmembrane spans lie at 19–39 (LALMGPAFIAAIGYIDPGNFA), 46–66 (ASFGYKLLWVVVWANLMAMLI), 94–114 (VWFYWVQAEIIAMATDLAEFI), 122–142 (LILGISLLQGAVLTGIATFLI), 156–176 (VIGGLLLFVAAAYIVELIFSQ), 196–216 (AVFLAAGVLGATIMPHVIYLH), 241–261 (IAMTIAGFVNLAMMATAAAAF), 290–310 (VFGLSLVAAGLSSTVVGTLAG), 329–349 (TITMMPSFIVILMGLDPTRIL), 350–370 (VMSQVLLSFGIALALVPLLIF), and 389–409 (IGWMIVVLVVALNIWLLVGTA).

This sequence belongs to the NRAMP family.

It is found in the cell inner membrane. Its function is as follows. H(+)-stimulated, divalent metal cation uptake system. The protein is Divalent metal cation transporter MntH of Citrobacter koseri (strain ATCC BAA-895 / CDC 4225-83 / SGSC4696).